The sequence spans 824 residues: DNA replication helicase (824 aa).

90 to 97 (GTAGAGKT) provides a ligand contact to ATP.

The protein belongs to the herpesviridae helicase family. In terms of assembly, associates with the primase and the primase-associated factor to form the helicase-primase complex.

Its subcellular location is the host nucleus. Functionally, component of the helicase/primase complex. Unwinds the DNA at the replication forks and generates single-stranded DNA for both leading and lagging strand synthesis. The primase synthesizes short RNA primers on the lagging strand that the polymerase elongates using dNTPs. Possesses helicase-like motifs and therefore may act as the helicase subunit of the complex. This is DNA replication helicase from Human herpesvirus 6A (strain Uganda-1102) (HHV-6 variant A).